The following is a 577-amino-acid chain: Laccase-25 (577 aa).

Residues 1 to 22 (MTLHWSLLLFIAIALVSSVAQA) form the signal peptide. Plastocyanin-like domains are found at residues 30–147 (NVGN…PRGG) and 158–313 (KEHV…YAGA). Asn-33 carries N-linked (GlcNAc...) asparagine glycosylation. His-81 and His-83 together coordinate Cu cation. N-linked (GlcNAc...) asparagine glycosylation occurs at Asn-109. 2 residues coordinate Cu cation: His-126 and His-128. Residues Asn-169, Asn-203, Asn-208, Asn-218, Asn-332, Asn-383, Asn-396, Asn-404, Asn-441, and Asn-459 are each glycosylated (N-linked (GlcNAc...) asparagine). Residues 423–560 (DFPDTPPVVF…AMVLEVLDGP (138 aa)) form the Plastocyanin-like 3 domain. Positions 477, 480, 482, 539, 540, 541, and 545 each coordinate Cu cation.

Belongs to the multicopper oxidase family. Requires Cu cation as cofactor.

It is found in the secreted. The protein localises to the extracellular space. It localises to the apoplast. The enzyme catalyses 4 hydroquinone + O2 = 4 benzosemiquinone + 2 H2O. Functionally, lignin degradation and detoxification of lignin-derived products. In Oryza sativa subsp. japonica (Rice), this protein is Laccase-25 (LAC25).